The primary structure comprises 158 residues: Cyclic pyranopterin monophosphate synthase (158 aa).

Residues 75 to 77 (LCH) and 113 to 114 (ME) contribute to the substrate site. Residue Asp128 is part of the active site.

Belongs to the MoaC family. Homohexamer; trimer of dimers.

It carries out the reaction (8S)-3',8-cyclo-7,8-dihydroguanosine 5'-triphosphate = cyclic pyranopterin phosphate + diphosphate. It participates in cofactor biosynthesis; molybdopterin biosynthesis. Its function is as follows. Catalyzes the conversion of (8S)-3',8-cyclo-7,8-dihydroguanosine 5'-triphosphate to cyclic pyranopterin monophosphate (cPMP). The protein is Cyclic pyranopterin monophosphate synthase of Ralstonia nicotianae (strain ATCC BAA-1114 / GMI1000) (Ralstonia solanacearum).